Consider the following 413-residue polypeptide: MVDLIVGLQWGDEGKGKIVDLVAKNYDIVIRSQGGHNAGHTVVVDGKKYALHLLPSGVLNPNATNVIGNGVVVYPKQLIKEIRSFEHNIKEKLLISDKAHMILDHHIAIDQAREKLRGKNAIGTTGRGIGPAYADKIARVGVRMGELRNIPKLIEKLVHYYEMNKGYFDYLGIEIPSISKLEEELKEYKQELGSLITNTTQYLWDNMDKNMLLEGAQATLLDIDHGTYPYVTSSNTIASGALTGSGIAPKNLNKVIGIAKAYATRVGNGPFPTEDDGKAGDKIREQGGEYGTTTGRPRRCGWFDVVAARYAVTLNGCDEVAVMKLDVLDGFDKVKVCVGYEIDGEKIDYFPSELDDVKPVYVELDGWDGSVHVTKWEDLPKNAQKYIEFIEEKIGTKIKYVSTGAERNATVIR.

GTP is bound by residues 11–17 and 39–41; these read GDEGKGK and GHT. The Proton acceptor role is filled by aspartate 12. Positions 12 and 39 each coordinate Mg(2+). IMP is bound by residues 12-15, 37-40, threonine 125, arginine 139, glutamine 217, threonine 232, and arginine 296; these read DEGK and NAGH. The active-site Proton donor is histidine 40. 292-298 contributes to the substrate binding site; sequence TTTGRPR. GTP contacts are provided by residues arginine 298, 324–326, and 402–404; these read KLD and STG.

This sequence belongs to the adenylosuccinate synthetase family. In terms of assembly, homodimer. Requires Mg(2+) as cofactor.

It is found in the cytoplasm. It carries out the reaction IMP + L-aspartate + GTP = N(6)-(1,2-dicarboxyethyl)-AMP + GDP + phosphate + 2 H(+). Its pathway is purine metabolism; AMP biosynthesis via de novo pathway; AMP from IMP: step 1/2. Functionally, plays an important role in the de novo pathway of purine nucleotide biosynthesis. Catalyzes the first committed step in the biosynthesis of AMP from IMP. This chain is Adenylosuccinate synthetase, found in Nautilia profundicola (strain ATCC BAA-1463 / DSM 18972 / AmH).